The sequence spans 283 residues: Probable endonuclease 4 (283 aa).

Positions 69, 109, 144, 178, 181, 215, 228, 230, and 260 each coordinate Zn(2+).

Belongs to the AP endonuclease 2 family. Zn(2+) serves as cofactor.

It catalyses the reaction Endonucleolytic cleavage to 5'-phosphooligonucleotide end-products.. Functionally, endonuclease IV plays a role in DNA repair. It cleaves phosphodiester bonds at apurinic or apyrimidinic (AP) sites, generating a 3'-hydroxyl group and a 5'-terminal sugar phosphate. This Thermosipho melanesiensis (strain DSM 12029 / CIP 104789 / BI429) protein is Probable endonuclease 4.